The chain runs to 134 residues: MLVTLLETFSVVFQVANGDGNCVPRFQDDVEFCDNYILEAVTEASKMIAPRAREQKLCCGFNKFTHCVTTASKKCSEAADRVKRVLDTKMTSLGVHCPDTNKVCNGGVNTSVSANTVTVYLLFSLGYFFYMNKL.

The N-terminal stretch at 1 to 18 (MLVTLLETFSVVFQVANG) is a signal peptide. Positions 19-56 (DGNCVPRFQDDVEFCDNYILEAVTEASKMIAPRAREQK) are excised as a propeptide.

In terms of tissue distribution, expressed by the venom gland.

It localises to the secreted. Functionally, probable secreted venom toxin. The chain is U35-theraphotoxin-Cg1a from Chilobrachys guangxiensis (Chinese earth tiger tarantula).